A 121-amino-acid chain; its full sequence is UPF0102 protein DSY2577 (121 aa).

It belongs to the UPF0102 family.

This chain is UPF0102 protein DSY2577, found in Desulfitobacterium hafniense (strain Y51).